The primary structure comprises 101 residues: MIKSELVQRIAEHNPHLYQRDVENIVNAILDEIVDALARGDRVELRGFGAFSVKHRPARAGRNPRTGAHVPVDQKSVPFFKTGKEMRERLNRETGDTDTGA.

Positions proline 57–valine 77 are disordered.

It belongs to the bacterial histone-like protein family. In terms of assembly, heterodimer of an alpha and a beta chain.

Its function is as follows. This protein is one of the two subunits of integration host factor, a specific DNA-binding protein that functions in genetic recombination as well as in transcriptional and translational control. In Rhodopseudomonas palustris (strain HaA2), this protein is Integration host factor subunit beta.